The primary structure comprises 365 residues: Phosphoserine aminotransferase (365 aa).

Arg46 provides a ligand contact to L-glutamate. Pyridoxal 5'-phosphate-binding positions include 80-81 (AT), Trp106, Thr157, Asp177, and Gln200. Residue Lys201 is modified to N6-(pyridoxal phosphate)lysine. 242–243 (NT) is a pyridoxal 5'-phosphate binding site.

It belongs to the class-V pyridoxal-phosphate-dependent aminotransferase family. SerC subfamily. As to quaternary structure, homodimer. Pyridoxal 5'-phosphate is required as a cofactor.

Its subcellular location is the cytoplasm. The catalysed reaction is O-phospho-L-serine + 2-oxoglutarate = 3-phosphooxypyruvate + L-glutamate. It catalyses the reaction 4-(phosphooxy)-L-threonine + 2-oxoglutarate = (R)-3-hydroxy-2-oxo-4-phosphooxybutanoate + L-glutamate. It participates in amino-acid biosynthesis; L-serine biosynthesis; L-serine from 3-phospho-D-glycerate: step 2/3. Its pathway is cofactor biosynthesis; pyridoxine 5'-phosphate biosynthesis; pyridoxine 5'-phosphate from D-erythrose 4-phosphate: step 3/5. Its function is as follows. Catalyzes the reversible conversion of 3-phosphohydroxypyruvate to phosphoserine and of 3-hydroxy-2-oxo-4-phosphonooxybutanoate to phosphohydroxythreonine. The chain is Phosphoserine aminotransferase from Leptospira biflexa serovar Patoc (strain Patoc 1 / Ames).